We begin with the raw amino-acid sequence, 183 residues long: Potassium-transporting ATPase KdpC subunit (183 aa).

A helical transmembrane segment spans residues 10–30 (ASLLVLSLVTGVAYPLLVTGI).

It belongs to the KdpC family. As to quaternary structure, the system is composed of three essential subunits: KdpA, KdpB and KdpC.

Its subcellular location is the cell inner membrane. In terms of biological role, part of the high-affinity ATP-driven potassium transport (or Kdp) system, which catalyzes the hydrolysis of ATP coupled with the electrogenic transport of potassium into the cytoplasm. This subunit acts as a catalytic chaperone that increases the ATP-binding affinity of the ATP-hydrolyzing subunit KdpB by the formation of a transient KdpB/KdpC/ATP ternary complex. The polypeptide is Potassium-transporting ATPase KdpC subunit (Pseudomonas aeruginosa (strain ATCC 15692 / DSM 22644 / CIP 104116 / JCM 14847 / LMG 12228 / 1C / PRS 101 / PAO1)).